We begin with the raw amino-acid sequence, 458 residues long: Protein adenylyltransferase FICD (458 aa).

At 1 to 23 the chain is on the cytoplasmic side; sequence MMLIPMASVMAVTEPKWVSVWSR. The chain crosses the membrane as a helical; Signal-anchor for type II membrane protein span at residues 24–44; sequence FLWVTLLSMVLGSLLALLLPL. Over 45–458 the chain is Lumenal; that stretch reads GAVEEQCLAV…GFKETLPVKP (414 aa). Ser79 is subject to O-AMP-serine; by autocatalysis. Thr80 is subject to O-AMP-threonine; by autocatalysis. TPR repeat units follow at residues 106-139 and 140-173; these read ARAA…DPDF and VDAL…SPYH. The residue at position 183 (Thr183) is an O-AMP-threonine; by autocatalysis. Residues 230–235 carry the Inhibitory (S/T)XXXE(G/N) motif motif; sequence TVAIEG. Glu234 provides a ligand contact to ATP. Asn275 carries N-linked (GlcNAc...) asparagine glycosylation. One can recognise a Fido domain in the interval 285-420; it reads VTISDVLEIH…VRPFIRFIAK (136 aa). 316-319 provides a ligand contact to ATP; it reads VGHH. Residue His363 is part of the active site. Residues 367-374, 399-400, and Asn407 each bind ATP; these read DGNGRTSR and YY. Asn446 is a glycosylation site (N-linked (GlcNAc...) asparagine).

The protein belongs to the fic family. As to quaternary structure, homodimer. Interacts with HD. Requires Mg(2+) as cofactor. Mn(2+) serves as cofactor. Auto-AMPylated in vitro; it is unclear whether auto-AMPylation is relevant in vivo. In terms of processing, N-glycosylated; predominantly glycosylated at Asn-275. Ubiquitous.

It localises to the endoplasmic reticulum membrane. It catalyses the reaction L-tyrosyl-[protein] + ATP = O-(5'-adenylyl)-L-tyrosyl-[protein] + diphosphate. It carries out the reaction 3-O-(5'-adenylyl)-L-threonyl-[protein] + H2O = L-threonyl-[protein] + AMP + H(+). The catalysed reaction is L-threonyl-[protein] + ATP = 3-O-(5'-adenylyl)-L-threonyl-[protein] + diphosphate. The side chain of Glu-234 determines which of the two opposing activities (AMPylase or de-AMPylase) will take place. In response to endoplasmic reticulum stress, mediates de-AMPylase activity. Adenylyltransferase activity is inhibited by the inhibitory helix present at the N-terminus: Glu-234 binds ATP and competes with ATP-binding at Arg-374, thereby preventing adenylyltransferase activity. In unstressed cells, disengagement of Glu-234 promotes adenylyltransferase activity. Activation dissociates ATP-binding from Glu-234, allowing ordered binding of the entire ATP moiety with the alpha-phosphate in an orientation that is productive for accepting an incoming target hydroxyl side chain. Functionally, protein that can both mediate the addition of adenosine 5'-monophosphate (AMP) to specific residues of target proteins (AMPylation), and the removal of the same modification from target proteins (de-AMPylation), depending on the context. The side chain of Glu-231 determines which of the two opposing activities (AMPylase or de-AMPylase) will take place. Acts as a key regulator of the ERN1/IRE1-mediated unfolded protein response (UPR) by mediating AMPylation or de-AMPylation of HSPA5/BiP. In unstressed cells, acts as an adenylyltransferase by mediating AMPylation of HSPA5/BiP at 'Thr-518', thereby inactivating it. In response to endoplasmic reticulum stress, acts as a phosphodiesterase by mediating removal of ATP (de-AMPylation) from HSPA5/BiP at 'Thr-518', leading to restore HSPA5/BiP activity. Although it is able to AMPylate RhoA, Rac and Cdc42 Rho GTPases in vitro, Rho GTPases do not constitute physiological substrates. The polypeptide is Protein adenylyltransferase FICD (Homo sapiens (Human)).